A 103-amino-acid chain; its full sequence is Acyl carrier protein homolog (103 aa).

Residues 3–87 form the Carrier domain; sequence ELTSEIKKEI…ETLEKVVQTT (85 aa). Residue S45 is modified to O-(pantetheine 4'-phosphoryl)serine.

4'-phosphopantetheine is transferred from CoA to a specific serine of the apo-ACP-like protein.

The protein localises to the cytoplasm. In terms of biological role, acyl carrier protein. The polypeptide is Acyl carrier protein homolog (Clostridium acetobutylicum (strain ATCC 824 / DSM 792 / JCM 1419 / IAM 19013 / LMG 5710 / NBRC 13948 / NRRL B-527 / VKM B-1787 / 2291 / W)).